The sequence spans 226 residues: E3 ubiquitin-protein ligase RNF186 (226 aa).

The segment at 39–85 (CLVCREPYSGVRPPKLLGCQHAFCAVCLKLLLCVQDDAWSIPCPLCR) adopts an RING-type zinc-finger fold. The interval 121–143 (GLANPATLTAGQPREAGEEEQDA) is disordered. 2 helical membrane-spanning segments follow: residues 157–177 (HLLL…PGVI) and 179–199 (WVLS…CSHP).

As to quaternary structure, interacts with BNIP1. Polyubiquitinated. 'Lys-29' autoubiquitination leads to proteasomal degradation.

The protein localises to the endoplasmic reticulum membrane. The catalysed reaction is S-ubiquitinyl-[E2 ubiquitin-conjugating enzyme]-L-cysteine + [acceptor protein]-L-lysine = [E2 ubiquitin-conjugating enzyme]-L-cysteine + N(6)-ubiquitinyl-[acceptor protein]-L-lysine.. It functions in the pathway protein modification; protein ubiquitination. Its function is as follows. E3 ubiquitin protein ligase that is part of an apoptotic signaling pathway activated by endoplasmic reticulum stress. Stimulates the expression of proteins specific of the unfolded protein response (UPR), ubiquitinates BNIP1 and regulates its localization to the mitochondrion and induces calcium release from the endoplasmic reticulum that ultimately leads to cell apoptosis. Plays a role in the maintenance of intestinal homeostasis and clearance of enteric pathogens. Upon NOD2 stimulation, ubiquitinates the ER stress sensor activating transcription factor 6/ATF6 and promotes the unfolded protein response UPR. Participates in basal level of autophagy maintenance by regulating the ubiquitination of EPHB2. Upon stimulation by ligand EFNB1, ubiquitinates EPHB2 and further recruits MAP1LC3B for autophagy induction. Controls nutrient sensing by ubiquitinating Sestrin-2/SESN2, which is an intracellular sensor of cytosolic leucine and inhibitor of mTORC1 activity. The polypeptide is E3 ubiquitin-protein ligase RNF186 (Bos taurus (Bovine)).